A 404-amino-acid polypeptide reads, in one-letter code: S-adenosylmethionine synthase (404 aa).

Histidine 16 is an ATP binding site. A Mg(2+)-binding site is contributed by aspartate 18. Glutamate 44 lines the K(+) pocket. The L-methionine site is built by glutamate 57 and glutamine 100. Positions 100 to 110 (QSPEINQGVAR) are flexible loop. Residues 177-179 (DGK), aspartate 257, 263-264 (RK), alanine 280, and lysine 284 contribute to the ATP site. Aspartate 257 is a binding site for L-methionine. Lysine 288 is an L-methionine binding site.

This sequence belongs to the AdoMet synthase family. As to quaternary structure, homotetramer; dimer of dimers. It depends on Mg(2+) as a cofactor. Requires K(+) as cofactor.

The protein resides in the cytoplasm. The catalysed reaction is L-methionine + ATP + H2O = S-adenosyl-L-methionine + phosphate + diphosphate. Its pathway is amino-acid biosynthesis; S-adenosyl-L-methionine biosynthesis; S-adenosyl-L-methionine from L-methionine: step 1/1. Catalyzes the formation of S-adenosylmethionine (AdoMet) from methionine and ATP. The overall synthetic reaction is composed of two sequential steps, AdoMet formation and the subsequent tripolyphosphate hydrolysis which occurs prior to release of AdoMet from the enzyme. In Bifidobacterium adolescentis (strain ATCC 15703 / DSM 20083 / NCTC 11814 / E194a), this protein is S-adenosylmethionine synthase.